Reading from the N-terminus, the 371-residue chain is Probable F-box protein At1g65740 (371 aa).

Residues 2 to 49 (VDWSTLPEELLHFIAARSFSLVEYKRFSSICVSWHSSVSGVKKNPFHR) form the F-box domain.

This Arabidopsis thaliana (Mouse-ear cress) protein is Probable F-box protein At1g65740.